The sequence spans 198 residues: Outer-membrane lipoprotein carrier protein (198 aa).

The first 16 residues, 1 to 16 (MKKWLVVFFLSASALA), serve as a signal peptide directing secretion.

It belongs to the LolA family. In terms of assembly, monomer.

The protein localises to the periplasm. Its function is as follows. Participates in the translocation of lipoproteins from the inner membrane to the outer membrane. Only forms a complex with a lipoprotein if the residue after the N-terminal Cys is not an aspartate (The Asp acts as a targeting signal to indicate that the lipoprotein should stay in the inner membrane). The protein is Outer-membrane lipoprotein carrier protein of Vibrio vulnificus (strain YJ016).